A 493-amino-acid chain; its full sequence is Trigger factor (493 aa).

Residues 169–254 (GDRVTMDYLG…VKEVAAPAET (86 aa)) enclose the PPIase FKBP-type domain. A disordered region spans residues 439 to 493 (ELLAEDEDGDDTKPAKKSAKKKAAKAEDASAEGEEAAPKKKAAAKKKAADEGDAE).

It belongs to the FKBP-type PPIase family. Tig subfamily.

It is found in the cytoplasm. It catalyses the reaction [protein]-peptidylproline (omega=180) = [protein]-peptidylproline (omega=0). Functionally, involved in protein export. Acts as a chaperone by maintaining the newly synthesized protein in an open conformation. Functions as a peptidyl-prolyl cis-trans isomerase. The polypeptide is Trigger factor (Allorhizobium ampelinum (strain ATCC BAA-846 / DSM 112012 / S4) (Agrobacterium vitis (strain S4))).